The following is a 611-amino-acid chain: Dihydroxy-acid dehydratase (611 aa).

Residue Asp81 coordinates Mg(2+). Cys122 contacts [2Fe-2S] cluster. 2 residues coordinate Mg(2+): Asp123 and Lys124. At Lys124 the chain carries N6-carboxylysine. Cys195 is a binding site for [2Fe-2S] cluster. Mg(2+) is bound at residue Glu491. Ser517 acts as the Proton acceptor in catalysis.

This sequence belongs to the IlvD/Edd family. In terms of assembly, homodimer. Requires [2Fe-2S] cluster as cofactor. It depends on Mg(2+) as a cofactor.

It carries out the reaction (2R)-2,3-dihydroxy-3-methylbutanoate = 3-methyl-2-oxobutanoate + H2O. It catalyses the reaction (2R,3R)-2,3-dihydroxy-3-methylpentanoate = (S)-3-methyl-2-oxopentanoate + H2O. It functions in the pathway amino-acid biosynthesis; L-isoleucine biosynthesis; L-isoleucine from 2-oxobutanoate: step 3/4. It participates in amino-acid biosynthesis; L-valine biosynthesis; L-valine from pyruvate: step 3/4. Functions in the biosynthesis of branched-chain amino acids. Catalyzes the dehydration of (2R,3R)-2,3-dihydroxy-3-methylpentanoate (2,3-dihydroxy-3-methylvalerate) into 2-oxo-3-methylpentanoate (2-oxo-3-methylvalerate) and of (2R)-2,3-dihydroxy-3-methylbutanoate (2,3-dihydroxyisovalerate) into 2-oxo-3-methylbutanoate (2-oxoisovalerate), the penultimate precursor to L-isoleucine and L-valine, respectively. This chain is Dihydroxy-acid dehydratase, found in Brucella melitensis biotype 1 (strain ATCC 23456 / CCUG 17765 / NCTC 10094 / 16M).